Reading from the N-terminus, the 323-residue chain is DNA repair and recombination protein RadA (323 aa).

115-122 (GEFGSGKT) contacts ATP.

The protein belongs to the eukaryotic RecA-like protein family.

Its function is as follows. Involved in DNA repair and in homologous recombination. Binds and assemble on single-stranded DNA to form a nucleoprotein filament. Hydrolyzes ATP in a ssDNA-dependent manner and promotes DNA strand exchange between homologous DNA molecules. The chain is DNA repair and recombination protein RadA from Thermoplasma volcanium (strain ATCC 51530 / DSM 4299 / JCM 9571 / NBRC 15438 / GSS1).